Reading from the N-terminus, the 834-residue chain is RNA-binding protein 12B-B (834 aa).

In terms of domain architecture, RRM 1 spans 154-229 (PYLFLRGLPY…RFIEVMQGSE (76 aa)). The segment at 237–277 (GTATEGGDTPRMRSEEHSPSRRINGRHFRKRSHSKSPRARS) is disordered. Basic and acidic residues predominate over residues 244-255 (DTPRMRSEEHSP). Positions 259-277 (INGRHFRKRSHSKSPRARS) are enriched in basic residues. 2 RRM domains span residues 283 to 359 (FYVH…PVSR) and 401 to 478 (LCIY…LISE). Disordered regions lie at residues 546-572 (GYFR…PWEE) and 621-643 (HFRR…RSRE). Residues 550 to 572 (QSDRCSPEDFRHSPEDYRHPWEE) are compositionally biased toward basic and acidic residues. Serine 701 carries the phosphoserine modification. Residues 758–834 (IRVMISNLPF…GPRKVKLSLL (77 aa)) enclose the RRM 4 domain.

In Mus musculus (Mouse), this protein is RNA-binding protein 12B-B (Rbm12b2).